The primary structure comprises 182 residues: T-cell surface glycoprotein CD3 gamma chain (182 aa).

The N-terminal stretch at 1 to 22 (MEQGKGLAVLILAIILLQGTLA) is a signal peptide. Over 23–116 (QSIKGNHLVK…CIELNAATIS (94 aa)) the chain is Extracellular. Residues 37–94 (QEDGSVLLTCDAEAKNITWFKDGKMIGFLTEDKKKWNLGSNAKDPRGMYQCKGSQNKS) form the Ig-like domain. A disulfide bridge links Cys46 with Cys87. N-linked (GlcNAc...) asparagine glycans are attached at residues Asn52 and Asn92. Residues 117–137 (GFLFAEIVSIFVLAVGVYFIA) traverse the membrane as a helical segment. Residues 138–182 (GQDGVRQSRASDKQTLLPNDQLYQPLKDREDDQYSHLQGNQLRRN) lie on the Cytoplasmic side of the membrane. Residue Ser145 is modified to Phosphoserine. Ser148 is modified (phosphoserine; by PKC). Residues 149–177 (DKQTLLPNDQLYQPLKDREDDQYSHLQGN) enclose the ITAM domain. The Di-leucine motif motif lies at 153–154 (LL).

As to quaternary structure, the TCR-CD3 complex is composed of a CD3D/CD3E and a CD3G/CD3E heterodimers that preferentially associate with TCRalpha and TCRbeta, respectively, to form TCRalpha/CD3E/CD3G and TCRbeta/CD3G/CD3E trimers. In turn, the hexamer interacts with CD3Z homodimer to form the TCR-CD3 complex. Alternatively, TCRalpha and TCRbeta can be replaced by TCRgamma and TCRdelta. Post-translationally, phosphorylated on Tyr residues after T-cell receptor triggering by LCK in association with CD4/CD8. Phosphorylated also by PKC; leading to the TCR complex down-regulation. Phosphorylated on Tyr residues after T-cell receptor triggering by LCK in association with CD4/CD8.

The protein resides in the cell membrane. Part of the TCR-CD3 complex present on T-lymphocyte cell surface that plays an essential role in adaptive immune response. When antigen presenting cells (APCs) activate T-cell receptor (TCR), TCR-mediated signals are transmitted across the cell membrane by the CD3 chains CD3D, CD3E, CD3G and CD3Z. All CD3 chains contain immunoreceptor tyrosine-based activation motifs (ITAMs) in their cytoplasmic domain. Upon TCR engagement, these motifs become phosphorylated by Src family protein tyrosine kinases LCK and FYN, resulting in the activation of downstream signaling pathways. In addition to this role of signal transduction in T-cell activation, CD3G plays an essential role in the dynamic regulation of TCR expression at the cell surface. Indeed, constitutive TCR cycling is dependent on the di-leucine-based (diL) receptor-sorting motif present in CD3G. The polypeptide is T-cell surface glycoprotein CD3 gamma chain (CD3G) (Homo sapiens (Human)).